A 188-amino-acid chain; its full sequence is Transcription antitermination protein NusB (188 aa).

The interval 154-188 is disordered; that stretch reads RAANPGAVSGSDAPVAPWDDSEELPAEDEAEDSRP. Over residues 172–188 the composition is skewed to acidic residues; the sequence is DDSEELPAEDEAEDSRP.

This sequence belongs to the NusB family.

In terms of biological role, involved in transcription antitermination. Required for transcription of ribosomal RNA (rRNA) genes. Binds specifically to the boxA antiterminator sequence of the ribosomal RNA (rrn) operons. In Corynebacterium efficiens (strain DSM 44549 / YS-314 / AJ 12310 / JCM 11189 / NBRC 100395), this protein is Transcription antitermination protein NusB.